A 53-amino-acid polypeptide reads, in one-letter code: uncharacterized protein (53 aa).

Residues 4-23 (STLIIIASNVVTVFVSVAVN) form a helical membrane-spanning segment. Residues 24 to 50 (RTDISWLKQRLISLEERINKLGEKHVF) are a coiled coil.

It localises to the host membrane. This is an uncharacterized protein from Pseudoalteromonas phage PM2 (Bacteriophage PM2).